We begin with the raw amino-acid sequence, 269 residues long: Protein TIFY 11B (269 aa).

Positions 100-135 constitute a Tify domain; the sequence is PESGNSQLTIFFGGKVMVFNEFPEDKAKEIMEVAKE. The segment at 160–181 is disordered; that stretch reads PDLNEPTSSGNNEDQETGQQHQ. Over residues 164–181 the composition is skewed to polar residues; the sequence is EPTSSGNNEDQETGQQHQ. The Jas motif lies at 186 to 210; sequence IARRASLHRFFAKRKDRAVARAPYQ. The Nuclear localization signal signature appears at 187 to 194; that stretch reads ARRASLHR. The segment at 209-269 is disordered; it reads YQVNQHGSHL…QSSKNLELKL (61 aa). A compositionally biased stretch (basic and acidic residues) spans 250–269; sequence MPMEVDKKEGQSSKNLELKL.

This sequence belongs to the TIFY/JAZ family. As to quaternary structure, homo- and heterodimer. Interacts with MYC2, AFPH2/NINJA, TIFY10A/JAZ1, TIFY10B/JAZ2, TIFY11A/JAZ5, TIFY5A/JAZ8, TIFY9/JAZ10 and TIFY3B/JAZ12. (Microbial infection) Interacts with the pathogenic Pseudomonas syringae HopZ1a protein. In terms of processing, (Microbial infection) Acetylated by Pseudomonas syringae HopZ1a. Post-translationally, ubiquitinated. Targeted for degradation by the SCF(COI1) E3 ubiquitin ligase-proteasome pathway during jasmonate signaling.

Its subcellular location is the nucleus. It is found in the cell membrane. Its function is as follows. Repressor of jasmonate responses. The chain is Protein TIFY 11B from Arabidopsis thaliana (Mouse-ear cress).